The sequence spans 367 residues: Eukaryotic translation initiation factor 3 subunit H (367 aa).

One can recognise an MPN domain in the interval 14-166; sequence VQVEALVVMK…LRAFRLSPNF (153 aa).

This sequence belongs to the eIF-3 subunit H family. As to quaternary structure, component of the eukaryotic translation initiation factor 3 (eIF-3) complex.

The protein localises to the cytoplasm. Component of the eukaryotic translation initiation factor 3 (eIF-3) complex, which is involved in protein synthesis of a specialized repertoire of mRNAs and, together with other initiation factors, stimulates binding of mRNA and methionyl-tRNAi to the 40S ribosome. The eIF-3 complex specifically targets and initiates translation of a subset of mRNAs involved in cell proliferation. This is Eukaryotic translation initiation factor 3 subunit H from Sclerotinia sclerotiorum (strain ATCC 18683 / 1980 / Ss-1) (White mold).